The sequence spans 220 residues: NADH-quinone oxidoreductase subunit I (220 aa).

4Fe-4S ferredoxin-type domains are found at residues 71–102 (LQRLLDSGSERCIGCGLCEKICTSNCIRIITH) and 112–141 (DSYTINLGRCIYCGLCAEVCPELAIVMGNR). C82, C85, C88, C92, C121, C124, C127, and C131 together coordinate [4Fe-4S] cluster. A disordered region spans residues 187–220 (MQATPLDYVQEPSKEESKEETPTRSESHKGDENV). The segment covering 198–220 (PSKEESKEETPTRSESHKGDENV) has biased composition (basic and acidic residues).

It belongs to the complex I 23 kDa subunit family. In terms of assembly, NDH-1 is composed of 14 different subunits. Subunits NuoA, H, J, K, L, M, N constitute the membrane sector of the complex. It depends on [4Fe-4S] cluster as a cofactor.

The protein localises to the cell inner membrane. It catalyses the reaction a quinone + NADH + 5 H(+)(in) = a quinol + NAD(+) + 4 H(+)(out). Functionally, NDH-1 shuttles electrons from NADH, via FMN and iron-sulfur (Fe-S) centers, to quinones in the respiratory chain. The immediate electron acceptor for the enzyme in this species is believed to be ubiquinone. Couples the redox reaction to proton translocation (for every two electrons transferred, four hydrogen ions are translocated across the cytoplasmic membrane), and thus conserves the redox energy in a proton gradient. This is NADH-quinone oxidoreductase subunit I from Helicobacter pylori (strain G27).